The following is a 120-amino-acid chain: NAD(P)H-quinone oxidoreductase subunit 3, chloroplastic (120 aa).

A run of 3 helical transmembrane segments spans residues 7 to 27, 64 to 84, and 89 to 109; these read YDYF…IFSL, MFAL…PWAM, and FGIS…IGLV.

The protein belongs to the complex I subunit 3 family. NDH is composed of at least 16 different subunits, 5 of which are encoded in the nucleus.

It is found in the plastid. Its subcellular location is the chloroplast thylakoid membrane. It carries out the reaction a plastoquinone + NADH + (n+1) H(+)(in) = a plastoquinol + NAD(+) + n H(+)(out). The enzyme catalyses a plastoquinone + NADPH + (n+1) H(+)(in) = a plastoquinol + NADP(+) + n H(+)(out). Its function is as follows. NDH shuttles electrons from NAD(P)H:plastoquinone, via FMN and iron-sulfur (Fe-S) centers, to quinones in the photosynthetic chain and possibly in a chloroplast respiratory chain. The immediate electron acceptor for the enzyme in this species is believed to be plastoquinone. Couples the redox reaction to proton translocation, and thus conserves the redox energy in a proton gradient. This is NAD(P)H-quinone oxidoreductase subunit 3, chloroplastic from Marchantia polymorpha (Common liverwort).